Consider the following 1377-residue polypeptide: Temperature-sensitive hemagglutinin tsh autotransporter (1377 aa).

The first 52 residues, 1 to 52 (MNRIYSLRYSAVARGFIAVSEFARKCVHKSVRRLCFPVLLLIPVLFSAGSLA), serve as a signal peptide directing secretion. Residues 53–302 (GTVNNELGYQ…AVIPLDFIGQ (250 aa)) enclose the Peptidase S6 domain. Catalysis depends on charge relay system residues His125, Asp153, and Ser259. Positions 1111–1377 (DINGEAGTWV…AINANIRYSF (267 aa)) constitute an Autotransporter domain.

Post-translationally, the C-terminus is blocked. In terms of processing, cleaved to release the mature protein from the outer membrane.

The protein resides in the periplasm. Its subcellular location is the secreted. It localises to the cell surface. The protein localises to the cell outer membrane. Its function is as follows. Contributes to the development of lesions and deposition of fibrin in the avian air sacs. It can act both as an adhesin and as a serine protease. Agglutinates erythrocytes while in contact with the extracellular surface of the bacterial cells. Can adhere to purified hemoglobin and bind with great efficiency to extracellular matrix proteins. Cleaves casein and exhibits mucinolytic activity. This chain is Temperature-sensitive hemagglutinin tsh autotransporter (tsh), found in Escherichia coli.